Reading from the N-terminus, the 252-residue chain is Probable transcriptional regulatory protein A1C_04175 (252 aa).

It belongs to the TACO1 family.

The protein resides in the cytoplasm. This is Probable transcriptional regulatory protein A1C_04175 from Rickettsia akari (strain Hartford).